The sequence spans 273 residues: METWSKLLDGTTPSRRWRKLVLLLPPLLLFLLQTEALQGLESDDRFRTRENECHFYAGGQVYPGEVSRVSVADHSLHLSKAKISKPAPYWEGTAVINGEFKELKLTDYRGKYLVFFFYPLDFTFVCPTEIIAFGDRIEEFKSINTEVVACSVDSQFTHLAWINTPRRQGGLGPIRIPLLSDLNHQISKDYGVYLEDSGHTLRGLFIIDDKGVLRQITLNDLPVGRSVDETLRLVQAFQYTDKHGEVCPAGWKPGSETIIPDPAGKLKYFDKLN.

An N-terminal signal peptide occupies residues 1–40 (METWSKLLDGTTPSRRWRKLVLLLPPLLLFLLQTEALQGL). The region spanning 81–239 (AKISKPAPYW…TLRLVQAFQY (159 aa)) is the Thioredoxin domain. Catalysis depends on Cys126, which acts as the Cysteine sulfenic acid (-SOH) intermediate.

It belongs to the peroxiredoxin family. AhpC/Prx1 subfamily. Homodimer; disulfide-linked, upon oxidation. 5 homodimers assemble to form a ring-like decamer. The enzyme can be inactivated by further oxidation of the cysteine sulfenic acid (C(P)-SOH) to sulphinic acid (C(P)-SO2H) and sulphonic acid (C(P)-SO3H) instead of its condensation to a disulfide bond.

Its subcellular location is the cytoplasm. The protein localises to the endoplasmic reticulum. It is found in the secreted. The enzyme catalyses a hydroperoxide + [thioredoxin]-dithiol = an alcohol + [thioredoxin]-disulfide + H2O. In terms of biological role, thiol-specific peroxidase that catalyzes the reduction of hydrogen peroxide and organic hydroperoxides to water and alcohols, respectively. Plays a role in cell protection against oxidative stress by detoxifying peroxides and as sensor of hydrogen peroxide-mediated signaling events. Regulates the activation of NF-kappa-B in the cytosol by a modulation of I-kappa-B-alpha phosphorylation. The protein is Peroxiredoxin-4 (Prdx4) of Rattus norvegicus (Rat).